Consider the following 366-residue polypeptide: Aminomethyltransferase (366 aa).

The protein belongs to the GcvT family. The glycine cleavage system is composed of four proteins: P, T, L and H.

It catalyses the reaction N(6)-[(R)-S(8)-aminomethyldihydrolipoyl]-L-lysyl-[protein] + (6S)-5,6,7,8-tetrahydrofolate = N(6)-[(R)-dihydrolipoyl]-L-lysyl-[protein] + (6R)-5,10-methylene-5,6,7,8-tetrahydrofolate + NH4(+). The glycine cleavage system catalyzes the degradation of glycine. This is Aminomethyltransferase from Neisseria meningitidis serogroup A / serotype 4A (strain DSM 15465 / Z2491).